The chain runs to 151 residues: Small ribosomal subunit protein bS6 (151 aa).

Positions 96–151 (HEEGQSAMLTRRDDRRERDGDDRPRRREGGFDRGDRGDRGDRGPRRPRDNEAGEGA) are disordered.

This sequence belongs to the bacterial ribosomal protein bS6 family.

In terms of biological role, binds together with bS18 to 16S ribosomal RNA. The polypeptide is Small ribosomal subunit protein bS6 (Brucella anthropi (strain ATCC 49188 / DSM 6882 / CCUG 24695 / JCM 21032 / LMG 3331 / NBRC 15819 / NCTC 12168 / Alc 37) (Ochrobactrum anthropi)).